The primary structure comprises 296 residues: Bifunctional protein FolD (296 aa).

NADP(+) contacts are provided by residues 169 to 171 (GRG), Thr196, and Val237.

Belongs to the tetrahydrofolate dehydrogenase/cyclohydrolase family. Homodimer.

It catalyses the reaction (6R)-5,10-methylene-5,6,7,8-tetrahydrofolate + NADP(+) = (6R)-5,10-methenyltetrahydrofolate + NADPH. It carries out the reaction (6R)-5,10-methenyltetrahydrofolate + H2O = (6R)-10-formyltetrahydrofolate + H(+). It participates in one-carbon metabolism; tetrahydrofolate interconversion. Its function is as follows. Catalyzes the oxidation of 5,10-methylenetetrahydrofolate to 5,10-methenyltetrahydrofolate and then the hydrolysis of 5,10-methenyltetrahydrofolate to 10-formyltetrahydrofolate. This Kocuria rhizophila (strain ATCC 9341 / DSM 348 / NBRC 103217 / DC2201) protein is Bifunctional protein FolD.